A 212-amino-acid chain; its full sequence is 2',3'-cyclic-nucleotide 3'-phosphodiesterase (212 aa).

Catalysis depends on histidine 51, which acts as the Proton donor/acceptor. Threonine 53 lines the substrate pocket. The active-site Proton donor/acceptor is the histidine 146. The substrate site is built by serine 148 and tyrosine 151.

It belongs to the 2H phosphoesterase superfamily. CPD1 family.

Its subcellular location is the golgi apparatus. The enzyme catalyses a nucleoside 2',3'-cyclic phosphate + H2O = a nucleoside 2'-phosphate + H(+). Its function is as follows. Involved in the metabolism of ADP-ribose 1',2'-cyclic phosphate which is produced as a consequence of tRNA splicing. This is 2',3'-cyclic-nucleotide 3'-phosphodiesterase (cpd-7) from Neurospora crassa (strain ATCC 24698 / 74-OR23-1A / CBS 708.71 / DSM 1257 / FGSC 987).